Here is a 487-residue protein sequence, read N- to C-terminus: DEAD-box ATP-dependent RNA helicase CshA (487 aa).

Positions 3–31 (ITFQDFQLSSDLTKAIKRMGFEEATPIQA) match the Q motif motif. The 171-residue stretch at 34–204 (IPLGLANKDV…ERFMTNPEHV (171 aa)) folds into the Helicase ATP-binding domain. 47–54 (AQTGTGKT) is a binding site for ATP. A DEAD box motif is present at residues 152 to 155 (DEAD). A Helicase C-terminal domain is found at 215–375 (NIQQFYLEVH…RMKAPTLDEA (161 aa)). Positions 428–440 (DNTPVRLTEEAPL) are enriched in basic and acidic residues. Residues 428-487 (DNTPVRLTEEAPLRTKRNKNHHHRSSKRRDGGGYRGKNNRSSYDKKRSSNDRRQKKSYNS) form a disordered region. Residues 441 to 454 (RTKRNKNHHHRSSK) are compositionally biased toward basic residues. The segment covering 469-479 (SYDKKRSSNDR) has biased composition (basic and acidic residues).

Belongs to the DEAD box helicase family. CshA subfamily. Oligomerizes, may be a member of the RNA degradosome.

It localises to the cytoplasm. The catalysed reaction is ATP + H2O = ADP + phosphate + H(+). Its function is as follows. DEAD-box RNA helicase possibly involved in RNA degradation. Unwinds dsRNA in both 5'- and 3'-directions, has RNA-dependent ATPase activity. This Bacillus licheniformis (strain ATCC 14580 / DSM 13 / JCM 2505 / CCUG 7422 / NBRC 12200 / NCIMB 9375 / NCTC 10341 / NRRL NRS-1264 / Gibson 46) protein is DEAD-box ATP-dependent RNA helicase CshA.